We begin with the raw amino-acid sequence, 75 residues long: UPF0270 protein Pfl01_4103 (75 aa).

It belongs to the UPF0270 family.

In Pseudomonas fluorescens (strain Pf0-1), this protein is UPF0270 protein Pfl01_4103.